Consider the following 356-residue polypeptide: sn-glycerol-3-phosphate import ATP-binding protein UgpC (356 aa).

The 232-residue stretch at 4-235 (LKLQAVTKSW…PASLFVASFI (232 aa)) folds into the ABC transporter domain. 37-44 (GPSGCGKS) serves as a coordination point for ATP.

Belongs to the ABC transporter superfamily. sn-glycerol-3-phosphate importer (TC 3.A.1.1.3) family. The complex is composed of two ATP-binding proteins (UgpC), two transmembrane proteins (UgpA and UgpE) and a solute-binding protein (UgpB).

The protein resides in the cell inner membrane. It carries out the reaction sn-glycerol 3-phosphate(out) + ATP + H2O = sn-glycerol 3-phosphate(in) + ADP + phosphate + H(+). Functionally, part of the ABC transporter complex UgpBAEC involved in sn-glycerol-3-phosphate (G3P) import. Responsible for energy coupling to the transport system. The sequence is that of sn-glycerol-3-phosphate import ATP-binding protein UgpC from Escherichia coli (strain UTI89 / UPEC).